The primary structure comprises 130 residues: Ribosome biogenesis inhibitor MINAS-60 (130 aa).

The segment at 61–130 (SKVQRIPTRP…RRRRPVTSSC (70 aa)) is disordered. Basic residues predominate over residues 109–130 (KGRRRRRRMRRRRRRRPVTSSC).

Interacts with 60S ribosome assembly factors GTPBP4 and MRTO4.

Its subcellular location is the nucleus. The protein localises to the nucleolus. Acts as a late-stage inhibitor of pre-60S ribosome assembly by preventing pre-60S ribosome export from nucleus. The chain is Ribosome biogenesis inhibitor MINAS-60 from Mus musculus (Mouse).